The following is a 465-amino-acid chain: Ribulose bisphosphate carboxylase large chain (465 aa).

Residue Lys-4 is modified to N6,N6,N6-trimethyllysine. Substrate-binding residues include Asn-113 and Thr-163. Lys-165 (proton acceptor) is an active-site residue. Lys-167 is a binding site for substrate. Residues Lys-191, Asp-193, and Glu-194 each contribute to the Mg(2+) site. N6-carboxylysine is present on Lys-191. His-284 functions as the Proton acceptor in the catalytic mechanism. Residues Arg-285, His-317, and Ser-369 each coordinate substrate.

Belongs to the RuBisCO large chain family. Type I subfamily. As to quaternary structure, heterohexadecamer of 8 large chains and 8 small chains; disulfide-linked. The disulfide link is formed within the large subunit homodimers. It depends on Mg(2+) as a cofactor. In terms of processing, the disulfide bond which can form in the large chain dimeric partners within the hexadecamer appears to be associated with oxidative stress and protein turnover.

It localises to the plastid. The protein localises to the chloroplast. The catalysed reaction is 2 (2R)-3-phosphoglycerate + 2 H(+) = D-ribulose 1,5-bisphosphate + CO2 + H2O. It carries out the reaction D-ribulose 1,5-bisphosphate + O2 = 2-phosphoglycolate + (2R)-3-phosphoglycerate + 2 H(+). Functionally, ruBisCO catalyzes two reactions: the carboxylation of D-ribulose 1,5-bisphosphate, the primary event in carbon dioxide fixation, as well as the oxidative fragmentation of the pentose substrate in the photorespiration process. Both reactions occur simultaneously and in competition at the same active site. This is Ribulose bisphosphate carboxylase large chain from Acer saccharum (Sugar maple).